The sequence spans 872 residues: Alanine--tRNA ligase (872 aa).

H567, H571, C669, and H673 together coordinate Zn(2+).

Belongs to the class-II aminoacyl-tRNA synthetase family. Requires Zn(2+) as cofactor.

It localises to the cytoplasm. The enzyme catalyses tRNA(Ala) + L-alanine + ATP = L-alanyl-tRNA(Ala) + AMP + diphosphate. In terms of biological role, catalyzes the attachment of alanine to tRNA(Ala) in a two-step reaction: alanine is first activated by ATP to form Ala-AMP and then transferred to the acceptor end of tRNA(Ala). Also edits incorrectly charged Ser-tRNA(Ala) and Gly-tRNA(Ala) via its editing domain. The polypeptide is Alanine--tRNA ligase (Streptococcus pneumoniae (strain Hungary19A-6)).